The sequence spans 229 residues: Potassium/proton antiporter CemA (229 aa).

4 helical membrane-spanning segments follow: residues 6–26 (AFIP…ISLC), 107–127 (IFNF…SFWG), 152–172 (FLIL…GWEL), and 190–210 (LSGL…YWIF).

This sequence belongs to the CemA family.

The protein resides in the plastid. The protein localises to the chloroplast inner membrane. It carries out the reaction K(+)(in) + H(+)(out) = K(+)(out) + H(+)(in). In terms of biological role, contributes to K(+)/H(+) antiport activity by supporting proton efflux to control proton extrusion and homeostasis in chloroplasts in a light-dependent manner to modulate photosynthesis. Prevents excessive induction of non-photochemical quenching (NPQ) under continuous-light conditions. Indirectly promotes efficient inorganic carbon uptake into chloroplasts. The sequence is that of Potassium/proton antiporter CemA from Aethionema cordifolium (Lebanon stonecress).